Reading from the N-terminus, the 856-residue chain is Rod cGMP-specific 3',5'-cyclic phosphodiesterase subunit beta (856 aa).

The residue at position 2 (serine 2) is an N-acetylserine. GAF domains follow at residues 71-220 and 252-429; these read NMER…TLNL and DIER…GWSV. The 334-residue stretch at 481 to 814 folds into the PDEase domain; it reads EEDELGKILK…KEWKALADEY (334 aa). Catalysis depends on histidine 557, which acts as the Proton donor. Residues histidine 561, histidine 597, aspartate 598, and aspartate 718 each coordinate a divalent metal cation. A lipid anchor (S-geranylgeranyl cysteine) is attached at cysteine 853. Residues 854 to 856 constitute a propeptide, removed in mature form; that stretch reads CIL.

The protein belongs to the cyclic nucleotide phosphodiesterase family. In terms of assembly, oligomer composed of two catalytic chains (alpha and beta), an inhibitory chain (gamma) and the delta chain. A divalent metal cation serves as cofactor.

It is found in the membrane. The protein localises to the cell projection. Its subcellular location is the cilium. The protein resides in the photoreceptor outer segment. It catalyses the reaction 3',5'-cyclic GMP + H2O = GMP + H(+). Rod-specific cGMP phosphodiesterase that catalyzes the hydrolysis of 3',5'-cyclic GMP. Necessary for the formation of a functional phosphodiesterase holoenzyme. Involved in retinal circadian rhythm photoentrainment via modulation of UVA and orange light-induced phase-shift of the retina clock. May participate in processes of transmission and amplification of the visual signal. This is Rod cGMP-specific 3',5'-cyclic phosphodiesterase subunit beta from Mus musculus (Mouse).